The chain runs to 79 residues: Raniseptin-3 (79 aa).

The first 22 residues, 1-22 (MAFLKKSLFLVLFLGIVSLSIC), serve as a signal peptide directing secretion. A propeptide spanning residues 23 to 49 (EEEKREGEEEEKQEEENEELSEEELRE) is cleaved from the precursor.

Belongs to the frog skin active peptide (FSAP) family. Dermaseptin subfamily. As to expression, expressed by the skin glands.

Its subcellular location is the secreted. Functionally, has antibacterial activity. The chain is Raniseptin-3 from Boana raniceps (Chaco tree frog).